The following is a 1009-amino-acid chain: Adhesion G-protein coupled receptor G2 (1009 aa).

An N-terminal signal peptide occupies residues 1–37 (MLFSGGQYSPVGRPEEVLLIYKIFLVIICFHVILVTS). Residues 38-617 (LKENGNSSLL…SRTSLPPSQM (580 aa)) lie on the Extracellular side of the membrane. 10 N-linked (GlcNAc...) asparagine glycosylation sites follow: asparagine 43, asparagine 77, asparagine 91, asparagine 103, asparagine 109, asparagine 127, asparagine 136, asparagine 154, asparagine 178, and asparagine 186. 2 disordered regions span residues 279 to 305 (MTPS…ASSP) and 325 to 346 (SHTL…PSVP). Residues 280–293 (TPSTPSLTQESNLP) are compositionally biased toward polar residues. Residues asparagine 362, asparagine 427, asparagine 448, asparagine 453, asparagine 520, asparagine 534, asparagine 539, asparagine 543, and asparagine 589 are each glycosylated (N-linked (GlcNAc...) asparagine). Residues 453–611 (NTTTFAAQDP…GILLDLSRTS (159 aa)) enclose the GAIN-B domain. 2 disulfide bridges follow: cysteine 562–cysteine 593 and cysteine 581–cysteine 595. Residues 562-611 (CVFWDLGRNGGKGGWSSDGCSVKDKRMNETICTCSHLTSFGILLDLSRTS) are GPS. The tract at residues 600–611 (SFGILLDLSRTS) is stachel. A helical membrane pass occupies residues 618–640 (MALTFITYIGCGLSSIFLSVTLV). Residues 641–655 (TYIAFEKIRRDYPSK) lie on the Cytoplasmic side of the membrane. A helical membrane pass occupies residues 656–679 (ILIQLCAALLLLNLIFLLDSWIAL). Topologically, residues 680–683 (YNTR) are extracellular. Residues 684–709 (GFCIAVAVFLHYFLLVSFTWMGLEAF) traverse the membrane as a helical segment. Cysteine 686 and cysteine 770 are disulfide-bonded. Over 710 to 728 (HMYLALVKVFNTYIRKYIL) the chain is Cytoplasmic. Residues 729 to 751 (KFCIVGWGIPAVVVSIVLTISPD) traverse the membrane as a helical segment. At 752-776 (NYGIGSYGKFPNGTPDDFCWINSNV) the chain is on the extracellular side. A helical membrane pass occupies residues 777–802 (VFYITVVGYFCVIFLLNVSMFIVVLV). Over 803 to 823 (QLCRIKKKKQLGAQRKTSIQD) the chain is Cytoplasmic. Residues 824-845 (LRSIAGLTFLLGITWGFAFFAW) traverse the membrane as a helical segment. At 846-850 (GPVNV) the chain is on the extracellular side. The N-linked (GlcNAc...) asparagine glycan is linked to asparagine 849. A helical transmembrane segment spans residues 851–872 (TFMYLFAIFNTLQGFFIFIFYC). Asparagine 860 provides a ligand contact to 3beta-hydroxyandrost-5-en-17-one. Topologically, residues 873-1009 (AAKENVRKQW…RGSLHFIEQM (137 aa)) are cytoplasmic. Phosphoserine is present on serine 1002.

It belongs to the G-protein coupled receptor 2 family. Adhesion G-protein coupled receptor (ADGR) subfamily. As to quaternary structure, heterodimer of 2 chains generated by proteolytic processing; the large extracellular N-terminal fragment and the membrane-bound C-terminal fragment predominantly remain associated and non-covalently linked. Interacts with CFTR. Proteolytically cleaved into 2 subunits, an extracellular subunit and a seven-transmembrane subunit. In terms of processing, highly glycosylated. Epididymis-specific expression (at protein level). Associated with apical membranes of efferent ductule and proximal epididymal duct epithelia. Mainly expressed in the nonciliated principal cells of the proximal excurrent ducts.

It is found in the apical cell membrane. Its activity is regulated as follows. Forms a heterodimer of 2 chains generated by proteolytic processing that remain associated through non-covalent interactions mediated by the GAIN-B domain. In the inactivated receptor, the Stachel sequence (also named stalk) is embedded in the GAIN-B domain, where it adopts a beta-strand conformation. On activation, the Stachel moves into the 7 transmembrane region and adopts a twisted hook-shaped configuration that forms contacts within the receptor, leading to coupling of a G-alpha protein, which activates signaling. The cleaved GAIN-B and N-terminal domains can then dissociate from the rest of the receptor. Deoxycorticosterone (DOC) acts as an antagonist of ADGRG2. Its function is as follows. Adhesion G-protein coupled receptor (aGPCR) for steroid hormones, such as dehydroepiandrosterone (DHEA; also named 3beta-hydroxyandrost-5-en-17-one) and androstenedione. Involved in a signal transduction pathway controlling epididymal function and male fertility. Ligand binding causes a conformation change that triggers signaling via guanine nucleotide-binding proteins (G proteins) and modulates the activity of downstream effectors, such as adenylate cyclase. ADGRG2 is coupled to G(s) G proteins and mediates activation of adenylate cyclase activity. Also able to couple with G(q) G proteins in vitro. May regulate fluid exchange within epididymis. This chain is Adhesion G-protein coupled receptor G2, found in Mus musculus (Mouse).